The sequence spans 217 residues: Adenylate kinase (217 aa).

Residue 10 to 15 (GAGKGT) participates in ATP binding. The segment at 30–59 (STGDMFRAAIKAGTALGMKAKEYMDAGSLV) is NMP. Residues threonine 31, arginine 36, 57–59 (SLV), 85–88 (GFPR), and glutamine 92 each bind AMP. The segment at 126-163 (GRRICRQCGGTYHMVFNPPAAEAVCDKCGGELYQRSDD) is LID. Residue arginine 127 participates in ATP binding. 2 residues coordinate Zn(2+): cysteine 130 and cysteine 133. 136–137 (TY) serves as a coordination point for ATP. Residues cysteine 150 and cysteine 153 each contribute to the Zn(2+) site. 2 residues coordinate AMP: arginine 160 and arginine 171. ATP is bound at residue glutamine 199.

The protein belongs to the adenylate kinase family. In terms of assembly, monomer.

It is found in the cytoplasm. It carries out the reaction AMP + ATP = 2 ADP. It participates in purine metabolism; AMP biosynthesis via salvage pathway; AMP from ADP: step 1/1. Functionally, catalyzes the reversible transfer of the terminal phosphate group between ATP and AMP. Plays an important role in cellular energy homeostasis and in adenine nucleotide metabolism. The polypeptide is Adenylate kinase (Desulfitobacterium hafniense (strain DSM 10664 / DCB-2)).